Reading from the N-terminus, the 588-residue chain is Succinate dehydrogenase flavoprotein subunit (588 aa).

FAD is bound by residues Gly-14–Gly-19, Ser-37–Gly-52, and Asp-221. His-45 carries the post-translational modification Tele-8alpha-FAD histidine. His-242 and Thr-254 together coordinate substrate. Lys-267 carries the post-translational modification N6-acetyllysine. Catalysis depends on Arg-286, which acts as the Proton acceptor. His-354 contributes to the substrate binding site. Glu-388 lines the FAD pocket. Arg-399 is a binding site for substrate. Ser-404–Leu-405 is an FAD binding site.

The protein belongs to the FAD-dependent oxidoreductase 2 family. FRD/SDH subfamily. Part of an enzyme complex containing four subunits: a flavoprotein, an iron-sulfur, cytochrome b-556, and a hydrophobic anchor protein. The complex forms trimers. Requires FAD as cofactor.

It is found in the cell inner membrane. It catalyses the reaction a quinone + succinate = fumarate + a quinol. It functions in the pathway carbohydrate metabolism; tricarboxylic acid cycle; fumarate from succinate (bacterial route): step 1/1. In terms of biological role, two distinct, membrane-bound, FAD-containing enzymes are responsible for the catalysis of fumarate and succinate interconversion; the fumarate reductase is used in anaerobic growth, and the succinate dehydrogenase is used in aerobic growth. The polypeptide is Succinate dehydrogenase flavoprotein subunit (sdhA) (Escherichia coli O157:H7).